Reading from the N-terminus, the 160-residue chain is Xanthine-guanine phosphoribosyltransferase (160 aa).

Residues 41 to 42 and 93 to 101 each bind 5-phospho-alpha-D-ribose 1-diphosphate; these read RG and DDLVDTGRT. Aspartate 94 is a Mg(2+) binding site. Guanine contacts are provided by aspartate 97 and isoleucine 140. 2 residues coordinate xanthine: aspartate 97 and isoleucine 140. GMP is bound by residues 97–101 and 139–140; these read DTGRT and WI.

It belongs to the purine/pyrimidine phosphoribosyltransferase family. XGPT subfamily. As to quaternary structure, homotetramer. It depends on Mg(2+) as a cofactor.

It localises to the cell inner membrane. The enzyme catalyses GMP + diphosphate = guanine + 5-phospho-alpha-D-ribose 1-diphosphate. It catalyses the reaction XMP + diphosphate = xanthine + 5-phospho-alpha-D-ribose 1-diphosphate. It carries out the reaction IMP + diphosphate = hypoxanthine + 5-phospho-alpha-D-ribose 1-diphosphate. It functions in the pathway purine metabolism; GMP biosynthesis via salvage pathway; GMP from guanine: step 1/1. It participates in purine metabolism; XMP biosynthesis via salvage pathway; XMP from xanthine: step 1/1. Purine salvage pathway enzyme that catalyzes the transfer of the ribosyl-5-phosphate group from 5-phospho-alpha-D-ribose 1-diphosphate (PRPP) to the N9 position of the 6-oxopurines guanine and xanthine to form the corresponding ribonucleotides GMP (guanosine 5'-monophosphate) and XMP (xanthosine 5'-monophosphate), with the release of PPi. To a lesser extent, also acts on hypoxanthine. In Desulfotalea psychrophila (strain LSv54 / DSM 12343), this protein is Xanthine-guanine phosphoribosyltransferase.